Reading from the N-terminus, the 129-residue chain is ATP synthase epsilon chain (129 aa).

It belongs to the ATPase epsilon chain family. F-type ATPases have 2 components, CF(1) - the catalytic core - and CF(0) - the membrane proton channel. CF(1) has five subunits: alpha(3), beta(3), gamma(1), delta(1), epsilon(1). CF(0) has three main subunits: a, b and c.

It is found in the cell inner membrane. In terms of biological role, produces ATP from ADP in the presence of a proton gradient across the membrane. The protein is ATP synthase epsilon chain of Campylobacter curvus (strain 525.92).